The following is a 289-amino-acid chain: Zinc finger matrin-type protein 3 (289 aa).

A disordered region spans residues 1–42; that stretch reads MILLQHAVLPPPKQPSPSPPMSVATRSTGTLQLPPQKPFGQE. Over residues 9-20 the composition is skewed to pro residues; the sequence is LPPPKQPSPSPP. Residues 24–33 are compositionally biased toward polar residues; the sequence is ATRSTGTLQL. Matrin-type zinc fingers lie at residues 70–100 and 147–177; these read LYCKLCNVTLNSAQQAQAHYQGKNHGKKLRN and DYCKLCDASFSSPAVAQAHYQGKNHAKRLRL. Residues 180–191 show a composition bias toward polar residues; it reads AQSNSFSESSEL. Positions 180–201 are disordered; that stretch reads AQSNSFSESSELGQRRARKEGN. Residues 246-276 form a Matrin-type 3 zinc finger; the sequence is FYCSMCNVGAGEEMEFRQHLESKQHKSKVSE.

As to quaternary structure, interacts with dsRNA. Highly expressed in adult brain, and moderately in adult kidney and testis. Not detected in fetal brain, heart, pancreas, adrenal gland, liver or small intestine.

Its subcellular location is the nucleus. It is found in the nucleolus. Acts as a bona fide target gene of p53/TP53. May play a role in the TP53-dependent growth regulatory pathway. May contribute to TP53-mediated apoptosis by regulation of TP53 expression and translocation to the nucleus and nucleolus. This is Zinc finger matrin-type protein 3 from Homo sapiens (Human).